Consider the following 335-residue polypeptide: Biotin synthase (335 aa).

Positions 41 to 269 (KQIQVCKLIS…TSDVRLSAGR (229 aa)) constitute a Radical SAM core domain. Cys-56, Cys-60, and Cys-63 together coordinate [4Fe-4S] cluster. Residues Cys-100, Cys-132, Cys-192, and Arg-264 each coordinate [2Fe-2S] cluster.

Belongs to the radical SAM superfamily. Biotin synthase family. As to quaternary structure, homodimer. [4Fe-4S] cluster is required as a cofactor. [2Fe-2S] cluster serves as cofactor.

It catalyses the reaction (4R,5S)-dethiobiotin + (sulfur carrier)-SH + 2 reduced [2Fe-2S]-[ferredoxin] + 2 S-adenosyl-L-methionine = (sulfur carrier)-H + biotin + 2 5'-deoxyadenosine + 2 L-methionine + 2 oxidized [2Fe-2S]-[ferredoxin]. It participates in cofactor biosynthesis; biotin biosynthesis; biotin from 7,8-diaminononanoate: step 2/2. Its function is as follows. Catalyzes the conversion of dethiobiotin (DTB) to biotin by the insertion of a sulfur atom into dethiobiotin via a radical-based mechanism. The polypeptide is Biotin synthase (Nostoc sp. (strain PCC 7120 / SAG 25.82 / UTEX 2576)).